Consider the following 205-residue polypeptide: Small ribosomal subunit protein uS4 (205 aa).

A disordered region spans residues methionine 1–glycine 49. Positions serine 94–valine 157 constitute an S4 RNA-binding domain.

It belongs to the universal ribosomal protein uS4 family. As to quaternary structure, part of the 30S ribosomal subunit. Contacts protein S5. The interaction surface between S4 and S5 is involved in control of translational fidelity.

Functionally, one of the primary rRNA binding proteins, it binds directly to 16S rRNA where it nucleates assembly of the body of the 30S subunit. In terms of biological role, with S5 and S12 plays an important role in translational accuracy. The polypeptide is Small ribosomal subunit protein uS4 (Chelativorans sp. (strain BNC1)).